A 217-amino-acid chain; its full sequence is 3-demethoxyubiquinol 3-hydroxylase (217 aa).

6 residues coordinate Fe cation: Glu66, Glu96, His99, Glu148, Glu180, and His183.

It belongs to the COQ7 family. Fe cation serves as cofactor.

It localises to the cell membrane. The enzyme catalyses a 5-methoxy-2-methyl-3-(all-trans-polyprenyl)benzene-1,4-diol + AH2 + O2 = a 3-demethylubiquinol + A + H2O. It functions in the pathway cofactor biosynthesis; ubiquinone biosynthesis. Its function is as follows. Catalyzes the hydroxylation of 2-nonaprenyl-3-methyl-6-methoxy-1,4-benzoquinol during ubiquinone biosynthesis. This is 3-demethoxyubiquinol 3-hydroxylase from Xylella fastidiosa (strain 9a5c).